Reading from the N-terminus, the 299-residue chain is AUGMIN subunit 1 (299 aa).

S2 bears the N-acetylserine mark. 2 coiled-coil regions span residues 76 to 96 and 164 to 184; these read RLKA…LESA and RKAI…EDDV.

It belongs to the HAUS1 family. Part of the augmin complex composed of 8 subunits. The complex acts on microtubules and interacts with gamma-tubulin in spindles and the phragmoplast. Interacts with AUG3.

The protein localises to the cytoplasm. It is found in the cytoskeleton. Its subcellular location is the spindle. The protein resides in the phragmoplast. Its function is as follows. Involved in microtubules reorganization during spindle and phragmoplast development. This Arabidopsis thaliana (Mouse-ear cress) protein is AUGMIN subunit 1.